Here is a 235-residue protein sequence, read N- to C-terminus: Protein YIP4 (235 aa).

5 helical membrane passes run 89-109 (ISANCDLWAPLAFIILYSLFV), 114-134 (SLFSSLFVSSWFILLVMALHL), 145-165 (LISYISISGYCLFPQVLNALV), 186-206 (VLSLVKLVVMALCLMWSVAAV), and 215-235 (IIEIYPLALCLFGMAWLSTIL).

The protein belongs to the YIP1 family. In terms of assembly, interacts with TVP18, TVP23, YIP1 and YIP5. Interacts with SEC4, YPT1, YPT6, YPT7, YPT10, YPT11, YPT31, YPT32 and YPT52; These proteins are all Rab GTPases.

The protein localises to the golgi apparatus membrane. May be involved in proper membrane localization of Rab GTPases. This is Protein YIP4 (YIP4) from Saccharomyces cerevisiae (strain ATCC 204508 / S288c) (Baker's yeast).